Here is a 205-residue protein sequence, read N- to C-terminus: Large ribosomal subunit protein bL25A (205 aa).

Belongs to the bacterial ribosomal protein bL25 family. CTC subfamily. Part of the 50S ribosomal subunit; part of the 5S rRNA/L5/L18/L25 subcomplex. Contacts the 5S rRNA. Binds to the 5S rRNA independently of L5 and L18.

Functionally, this is one of the proteins that binds to the 5S RNA in the ribosome where it forms part of the central protuberance. This Symbiobacterium thermophilum (strain DSM 24528 / JCM 14929 / IAM 14863 / T) protein is Large ribosomal subunit protein bL25A.